The primary structure comprises 1101 residues: Furin-like protease 1, isoform 1-CRR (1101 aa).

Residues 1-57 (MKNDVVRWSRQPTSNTTNSSSSSRSDSNSTHKHRSKSNKLNARQLGSNAARSCQQRS) form a disordered region. Positions 13-28 (TSNTTNSSSSSRSDSN) are enriched in low complexity. Residues asparagine 15, asparagine 18, and asparagine 28 are each glycosylated (N-linked (GlcNAc...) asparagine). Residues 38–57 (NKLNARQLGSNAARSCQQRS) show a composition bias toward polar residues. Asparagine 108 carries N-linked (GlcNAc...) asparagine glycosylation. The chain crosses the membrane as a helical span at residues 119–139 (VFLLALQFSAVVFLCNINVGF). Over residues 150–163 (SAGGSSPAAPSSAP) the composition is skewed to low complexity. The segment at 150-187 (SAGGSSPAAPSSAPSSPPTVAVPPPPPPSSALKVDPNG) is disordered. Residues 164–178 (SSPPTVAVPPPPPPS) show a composition bias toward pro residues. N-linked (GlcNAc...) asparagine glycosylation is present at asparagine 333. A Peptidase S8 domain is found at 340–654 (MWYLNRGGGL…YGLMDAAEMV (315 aa)). Catalysis depends on charge relay system residues aspartate 372 and histidine 413. Asparagine 426 carries an N-linked (GlcNAc...) asparagine glycan. 2 disulfides stabilise this stretch: cysteine 430–cysteine 579 and cysteine 522–cysteine 552. Serine 587 acts as the Charge relay system in catalysis. Residue asparagine 606 is glycosylated (N-linked (GlcNAc...) asparagine). In terms of domain architecture, P/Homo B spans 662 to 791 (AVPEQQRCEI…DMIFYGTETP (130 aa)). Cysteine 669 and cysteine 695 form a disulfide bridge. N-linked (GlcNAc...) asparagine glycosylation is found at asparagine 727 and asparagine 859. A disordered region spans residues 886 to 915 (EEDEQDDEVTRGPVNPYSSSPMDHSLLMSN). Polar residues predominate over residues 901-915 (PYSSSPMDHSLLMSN). N-linked (GlcNAc...) asparagine glycosylation is present at asparagine 978. The helical transmembrane segment at 1014-1034 (TVLLLVSVIFTLMGVAVAGGI) threads the bilayer.

The protein belongs to the peptidase S8 family. Furin subfamily. The cofactor is Ca(2+). In terms of tissue distribution, in adults, isoform 1-CRR is expressed in CNS, fat body, and female reproductive tissues, and in embryos, in anal pads, hindgut, developing antennomaxillary complex, oenocytes, clipeolabrum, pharynx, trachea, CNS and developing posterior spiracles.

Its subcellular location is the golgi apparatus membrane. It catalyses the reaction Release of mature proteins from their proproteins by cleavage of -Arg-Xaa-Yaa-Arg-|-Zaa- bonds, where Xaa can be any amino acid and Yaa is Arg or Lys. Releases albumin, complement component C3 and von Willebrand factor from their respective precursors.. In terms of biological role, furin is likely to represent the ubiquitous endoprotease activity within constitutive secretory pathways and capable of cleavage at the RX(K/R)R consensus motif. The polypeptide is Furin-like protease 1, isoform 1-CRR (Fur1) (Drosophila melanogaster (Fruit fly)).